The primary structure comprises 313 residues: Acetylglutamate kinase (313 aa).

Substrate-binding positions include 84-85 (GG), arginine 106, and asparagine 210.

This sequence belongs to the acetylglutamate kinase family. ArgB subfamily.

It is found in the cytoplasm. The catalysed reaction is N-acetyl-L-glutamate + ATP = N-acetyl-L-glutamyl 5-phosphate + ADP. The protein operates within amino-acid biosynthesis; L-arginine biosynthesis; N(2)-acetyl-L-ornithine from L-glutamate: step 2/4. Catalyzes the ATP-dependent phosphorylation of N-acetyl-L-glutamate. This is Acetylglutamate kinase from Gluconacetobacter diazotrophicus (strain ATCC 49037 / DSM 5601 / CCUG 37298 / CIP 103539 / LMG 7603 / PAl5).